A 653-amino-acid chain; its full sequence is Fructose-1,6-bisphosphatase class 3 (653 aa).

This sequence belongs to the FBPase class 3 family. Mn(2+) serves as cofactor.

The enzyme catalyses beta-D-fructose 1,6-bisphosphate + H2O = beta-D-fructose 6-phosphate + phosphate. It functions in the pathway carbohydrate biosynthesis; gluconeogenesis. In Listeria monocytogenes serovar 1/2a (strain ATCC BAA-679 / EGD-e), this protein is Fructose-1,6-bisphosphatase class 3.